Reading from the N-terminus, the 68-residue chain is Beta-defensin 1 (68 aa).

An N-terminal signal peptide occupies residues 1-21 (MRTSYLLLFTLCLLLSEMASG). Residues 22–32 (DNFLTGLGHRS) constitute a propeptide that is removed on maturation. 3 cysteine pairs are disulfide-bonded: Cys37–Cys66, Cys44–Cys59, and Cys49–Cys67.

This sequence belongs to the beta-defensin family. As to quaternary structure, monomer. Homodimer.

The protein localises to the secreted. It is found in the membrane. Has bactericidal activity. May act as a ligand for C-C chemokine receptor CCR6. Positively regulates the sperm motility and bactericidal activity in a CCR6-dependent manner. Binds to CCR6 and triggers Ca2+ mobilization in the sperm which is important for its motility. The protein is Beta-defensin 1 (DEFB1) of Hylobates moloch (Silvery gibbon).